Here is a 432-residue protein sequence, read N- to C-terminus: Acyl-CoA dehydrogenase AFT10-1 (432 aa).

This sequence belongs to the acyl-CoA dehydrogenase family. FAD is required as a cofactor.

It functions in the pathway mycotoxin biosynthesis. In terms of biological role, acyl-CoA dehydrogenase; part of the gene clusters that mediate the biosynthesis of the host-selective toxins (HSTs) AF-toxins responsible for Alternaria black spot of strawberry disease by the strawberry pathotype. AF-toxin I and III are valine derivatives of 2,3-dyhydroxy-isovaleric acid and 2-hydroxy-isovaleric acid respectively, while AF II is an isoleucine derivative of 2-hydroxy-valeric acid. These derivatives are bound to a 9,10-epoxy-8-hydroxy-9-methyl-decatrienoic acid (EDA) moiety. On cellular level, AF-toxins affect plasma membrane of susceptible cells and cause a sudden increase in loss of K(+) after a few minutes of toxin treatment. The aldo-keto reductase AFTS1 catalyzes the conversion of 2-keto-isovaleric acid (2-KIV) to 2-hydroxy-isovaleric acid (2-HIV) by reduction of its ketone to an alcohol. The acyl-CoA ligase AFT1, the hydrolase AFT2 and the enoyl-CoA hydratases AFT3 and AFT6, but also the polyketide synthase AFT9, the acyl-CoA dehydrogenase AFT10, the cytochrome P450 monooxygenase AFT11 and the oxidoreductase AFT12 are all involved in the biosynthesis of the AK-, AF- and ACT-toxin common EDA structural moiety. The exact function of each enzyme, and of additional enzymes identified within the AF-toxin clusters have still to be determined. This chain is Acyl-CoA dehydrogenase AFT10-1, found in Alternaria alternata (Alternaria rot fungus).